The sequence spans 41 residues: Cytochrome b559 subunit beta (41 aa).

A helical transmembrane segment spans residues 16-32 (WLAVHALAIPTVFFLGS). Histidine 20 is a heme binding site.

The protein belongs to the PsbE/PsbF family. Heterodimer of an alpha subunit and a beta subunit. PSII is composed of 1 copy each of membrane proteins PsbA, PsbB, PsbC, PsbD, PsbE, PsbF, PsbH, PsbI, PsbJ, PsbK, PsbL, PsbM, PsbT, PsbY, PsbZ, Psb30/Ycf12, at least 3 peripheral proteins of the oxygen-evolving complex and a large number of cofactors. It forms dimeric complexes. Heme b is required as a cofactor.

The protein resides in the plastid. Its subcellular location is the chloroplast thylakoid membrane. Functionally, this b-type cytochrome is tightly associated with the reaction center of photosystem II (PSII). PSII is a light-driven water:plastoquinone oxidoreductase that uses light energy to abstract electrons from H(2)O, generating O(2) and a proton gradient subsequently used for ATP formation. It consists of a core antenna complex that captures photons, and an electron transfer chain that converts photonic excitation into a charge separation. The protein is Cytochrome b559 subunit beta of Euglena gracilis.